A 509-amino-acid polypeptide reads, in one-letter code: Acetyl-coenzyme A carboxylase carboxyl transferase subunit beta, chloroplastic (509 aa).

Residues 164-216 form a disordered region; it reads HGSVCDGESHNSSEGESSSRRTHTKGVDLTIRESSNENERESSNENERKSSND. Composition is skewed to basic and acidic residues over residues 170–182 and 193–216; these read GESH…ESSS and TIRE…SSND. The CoA carboxyltransferase N-terminal domain maps to 226-509; sequence LWLQCENCYG…LNQNSNQVEC (284 aa). Residues cysteine 230, cysteine 233, cysteine 249, and cysteine 252 each contribute to the Zn(2+) site. A C4-type zinc finger spans residues 230–252; it reads CENCYGLNYKKFLKSKMNICEQC. The segment at 288 to 307 is disordered; the sequence is FDSEGEQEQEQEQEQEEEET.

This sequence belongs to the AccD/PCCB family. Acetyl-CoA carboxylase is a heterohexamer composed of biotin carboxyl carrier protein, biotin carboxylase and 2 subunits each of ACCase subunit alpha and ACCase plastid-coded subunit beta (accD). Zn(2+) is required as a cofactor.

It localises to the plastid. It is found in the chloroplast stroma. It carries out the reaction N(6)-carboxybiotinyl-L-lysyl-[protein] + acetyl-CoA = N(6)-biotinyl-L-lysyl-[protein] + malonyl-CoA. The protein operates within lipid metabolism; malonyl-CoA biosynthesis; malonyl-CoA from acetyl-CoA: step 1/1. In terms of biological role, component of the acetyl coenzyme A carboxylase (ACC) complex. Biotin carboxylase (BC) catalyzes the carboxylation of biotin on its carrier protein (BCCP) and then the CO(2) group is transferred by the transcarboxylase to acetyl-CoA to form malonyl-CoA. The chain is Acetyl-coenzyme A carboxylase carboxyl transferase subunit beta, chloroplastic from Ipomoea purpurea (Common morning glory).